The following is a 276-amino-acid chain: Light-independent protochlorophyllide reductase iron-sulfur ATP-binding protein (276 aa).

ATP contacts are provided by residues 12–17 (GIGKST) and Lys-41. Position 16 (Ser-16) interacts with Mg(2+). [4Fe-4S] cluster is bound by residues Cys-97 and Cys-131. 182–183 (NR) provides a ligand contact to ATP.

Belongs to the NifH/BchL/ChlL family. In terms of assembly, homodimer. Protochlorophyllide reductase is composed of three subunits; BchL, BchN and BchB. [4Fe-4S] cluster serves as cofactor.

It catalyses the reaction chlorophyllide a + oxidized 2[4Fe-4S]-[ferredoxin] + 2 ADP + 2 phosphate = protochlorophyllide a + reduced 2[4Fe-4S]-[ferredoxin] + 2 ATP + 2 H2O. Its pathway is porphyrin-containing compound metabolism; bacteriochlorophyll biosynthesis (light-independent). Component of the dark-operative protochlorophyllide reductase (DPOR) that uses Mg-ATP and reduced ferredoxin to reduce ring D of protochlorophyllide (Pchlide) to form chlorophyllide a (Chlide). This reaction is light-independent. The L component serves as a unique electron donor to the NB-component of the complex, and binds Mg-ATP. The sequence is that of Light-independent protochlorophyllide reductase iron-sulfur ATP-binding protein from Chlorobium chlorochromatii (strain CaD3).